The following is a 360-amino-acid chain: Phosphoserine aminotransferase (360 aa).

Position 41 (Arg41) interacts with L-glutamate. Pyridoxal 5'-phosphate contacts are provided by Trp101, Thr152, Asp172, and Gln195. Position 196 is an N6-(pyridoxal phosphate)lysine (Lys196). 237–238 (NT) lines the pyridoxal 5'-phosphate pocket.

This sequence belongs to the class-V pyridoxal-phosphate-dependent aminotransferase family. SerC subfamily. Homodimer. Pyridoxal 5'-phosphate is required as a cofactor.

The protein resides in the cytoplasm. The enzyme catalyses O-phospho-L-serine + 2-oxoglutarate = 3-phosphooxypyruvate + L-glutamate. It catalyses the reaction 4-(phosphooxy)-L-threonine + 2-oxoglutarate = (R)-3-hydroxy-2-oxo-4-phosphooxybutanoate + L-glutamate. It participates in amino-acid biosynthesis; L-serine biosynthesis; L-serine from 3-phospho-D-glycerate: step 2/3. The protein operates within cofactor biosynthesis; pyridoxine 5'-phosphate biosynthesis; pyridoxine 5'-phosphate from D-erythrose 4-phosphate: step 3/5. Catalyzes the reversible conversion of 3-phosphohydroxypyruvate to phosphoserine and of 3-hydroxy-2-oxo-4-phosphonooxybutanoate to phosphohydroxythreonine. The polypeptide is Phosphoserine aminotransferase (Burkholderia lata (strain ATCC 17760 / DSM 23089 / LMG 22485 / NCIMB 9086 / R18194 / 383)).